We begin with the raw amino-acid sequence, 802 residues long: E3 ubiquitin-protein ligase RNF10 (802 aa).

Low complexity-rich tracts occupy residues 1–31 (MPQS…SGSS), 78–90 (SNQS…QKSK), and 104–113 (SKPFSSSSNG). The segment at 1–134 (MPQSSPSTAA…AEFSPAQFSG (134 aa)) is disordered. At serine 5 the chain carries Phosphoserine. Phosphoserine is present on serine 110. The segment covering 114–124 (GRRDEVAEAQR) has biased composition (basic and acidic residues). At serine 128 the chain carries Phosphoserine. An RING-type zinc finger spans residues 225-267 (CPICLYPPTAAKITRCGHIFCWACILHYLSLSERTWSKCPICY). Positions 645–654 (DSALGPTSTE) are enriched in polar residues. Disordered regions lie at residues 645 to 664 (DSAL…LSPL), 716 to 753 (DGWP…VPSF), and 767 to 802 (KLDT…VHTK). A compositionally biased stretch (basic and acidic residues) spans 716 to 728 (DGWPKAAPKKDDN). Residues 793 to 802 (LFSTSVVHTK) show a composition bias toward polar residues.

It belongs to the RNF10 family. Interacts with MEOX2.

It localises to the cytoplasm. It is found in the nucleus. The enzyme catalyses S-ubiquitinyl-[E2 ubiquitin-conjugating enzyme]-L-cysteine + [acceptor protein]-L-lysine = [E2 ubiquitin-conjugating enzyme]-L-cysteine + N(6)-ubiquitinyl-[acceptor protein]-L-lysine.. The protein operates within protein modification; protein ubiquitination. E3 ubiquitin-protein ligase that catalyzes monoubiquitination of 40S ribosomal proteins RPS2/us5 and RPS3/us3 in response to ribosome stalling. Part of a ribosome quality control that takes place when ribosomes have stalled during translation initiation (iRQC): RNF10 acts by mediating monoubiquitination of RPS2/us5 and RPS3/us3, promoting their degradation by the proteasome. Also promotes ubiquitination of 40S ribosomal proteins in response to ribosome stalling during translation elongation. The action of RNF10 in iRQC is counteracted by USP10. May also act as a transcriptional factor involved in the regulation of MAG (Myelin-associated glycoprotein) expression. Acts as a regulator of Schwann cell differentiation and myelination. The chain is E3 ubiquitin-protein ligase RNF10 from Rattus norvegicus (Rat).